Consider the following 178-residue polypeptide: Caveolin-1 (178 aa).

Ser2 carries the post-translational modification N-acetylserine. Ser2 carries the phosphoserine modification. Positions 2–94 (SGGKYVDSEG…WKASFTTFTV (93 aa)) are required for homooligomerization. Residues 2-104 (SGGKYVDSEG…TKYWFYRLLS (103 aa)) are Cytoplasmic-facing. Lys5 is subject to N6-acetyllysine; alternate. Lys5 participates in a covalent cross-link: Glycyl lysine isopeptide (Lys-Gly) (interchain with G-Cter in ubiquitin); alternate. Tyr6 is subject to Phosphotyrosine. Position 9 is a phosphoserine (Ser9). Phosphotyrosine; by ABL1 is present on Tyr14. Residue Tyr25 is modified to Phosphotyrosine. Residues Lys26 and Lys30 each participate in a glycyl lysine isopeptide (Lys-Gly) (interchain with G-Cter in ubiquitin) cross-link. Ser37 is subject to Phosphoserine. Residues Lys39, Lys47, and Lys57 each participate in a glycyl lysine isopeptide (Lys-Gly) (interchain with G-Cter in ubiquitin) cross-link. Residues 82 to 94 (DGIWKASFTTFTV) are interaction with CAVIN3. The segment at residues 105 to 125 (ALFGIPMALIWGIYFAILSFL) is an intramembrane region (helical). At 126–178 (HIWAVVPCIKSFLIEIQCISRVYSIYVHTVCDPLFEAVGKIFSNVRINLQKEI) the chain is on the cytoplasmic side. Residues 131-142 (VPCIKSFLIEIQ) are interacts with SPRY1, SPRY2, SPRY3 and SPRY4. 3 S-palmitoyl cysteine lipidation sites follow: Cys133, Cys143, and Cys156. The tract at residues 149–160 (SIYVHTVCDPLF) is interacts with SPRY1, SPRY2, and SPRY4. Residues 167-178 (FSNVRINLQKEI) are interacts with SPRY1, SPRY2, SPRY3 and SPRY4.

Belongs to the caveolin family. As to quaternary structure, homooligomer. Interacts with GLIPR2. Interacts with NOSTRIN. Interacts with SNAP25 and STX1A. Interacts (via the N-terminus) with DPP4; the interaction is direct. Interacts with CTNNB1, CDH1 and JUP. Interacts with PACSIN2; this interaction induces membrane tubulation. Interacts with SLC7A9. Interacts with BMX and BTK. Interacts with TGFBR1. Interacts with CAVIN3 (via leucine-zipper domain) in a cholesterol-sensitive manner. Interacts with CAVIN1. Interacts with EHD2 in a cholesterol-dependent manner. Forms a ternary complex with UBXN6 and VCP; mediates CAV1 targeting to lysosomes for degradation. Interacts with ABCG1; this interaction regulates ABCG1-mediated cholesterol efflux. Interacts with NEU3; this interaction enhances NEU3 sialidase activity within caveola. Interacts (via C-terminus) with SPRY1, SPRY2 (via C-terminus), SPRY3, and SPRY4. Interacts with IGFBP5; this interaction allows trafficking of IGFBP5 from the plasma membrane to the nucleus. In terms of processing, phosphorylated at Tyr-14 by ABL1 in response to oxidative stress. Ubiquitinated. Undergo monoubiquitination and multi- and/or polyubiquitination. Monoubiquitination of N-terminal lysines promotes integration in a ternary complex with UBXN6 and VCP which promotes oligomeric CAV1 targeting to lysosomes for degradation. Ubiquitinated by ZNRF1; leading to degradation and modulation of the TLR4-mediated immune response.

The protein localises to the golgi apparatus membrane. It localises to the cell membrane. The protein resides in the membrane. Its subcellular location is the caveola. It is found in the membrane raft. In terms of biological role, may act as a scaffolding protein within caveolar membranes. Forms a stable heterooligomeric complex with CAV2 that targets to lipid rafts and drives caveolae formation. Mediates the recruitment of CAVIN proteins (CAVIN1/2/3/4) to the caveolae. Interacts directly with G-protein alpha subunits and can functionally regulate their activity. Involved in the costimulatory signal essential for T-cell receptor (TCR)-mediated T-cell activation. Its binding to DPP4 induces T-cell proliferation and NF-kappa-B activation in a T-cell receptor/CD3-dependent manner. Recruits CTNNB1 to caveolar membranes and may regulate CTNNB1-mediated signaling through the Wnt pathway. Negatively regulates TGFB1-mediated activation of SMAD2/3 by mediating the internalization of TGFBR1 from membrane rafts leading to its subsequent degradation. Binds 20(S)-hydroxycholesterol (20(S)-OHC). The protein is Caveolin-1 (CAV1) of Pongo abelii (Sumatran orangutan).